A 451-amino-acid polypeptide reads, in one-letter code: Phosphoglucosamine mutase (451 aa).

Serine 101 (phosphoserine intermediate) is an active-site residue. Mg(2+) contacts are provided by serine 101, aspartate 240, aspartate 242, and aspartate 244. Serine 101 bears the Phosphoserine mark.

This sequence belongs to the phosphohexose mutase family. The cofactor is Mg(2+). Activated by phosphorylation.

It catalyses the reaction alpha-D-glucosamine 1-phosphate = D-glucosamine 6-phosphate. Its function is as follows. Catalyzes the conversion of glucosamine-6-phosphate to glucosamine-1-phosphate. The sequence is that of Phosphoglucosamine mutase from Streptococcus pyogenes serotype M2 (strain MGAS10270).